Here is an 850-residue protein sequence, read N- to C-terminus: MTQVTVKELAQEVEAPVERLLQQMREAGLPHTDAGQVVTDNEKQTLLTHLKSSHKSKAEEPRKITLQRKTTSTLRVAGSKSISVEVRKKKVFVQRSPEEIQAEQKREQEERRAAENAAREKADADARQRNEEQARRQAAQAPAAAPVAKAEPAPAAAAPAAPAVPDAPVSEDAAARAAERKKDEARRNESRTRDDDRRGGGVAGERRGEAPRVSIKVKVKEKEKAPTPRAAPRTTDEESDGFRRGRGGKGKPKKRNQHGFQNPTGPVIRDVTIGETITVSDLAQQMSVKGAEVVKFMFKLGTPVTINQVLDQETAQLVAEELGHKVTLVSDTALEDSLAESLKFEGESESRAPVVTVMGHVDHGKTSLLDYIRRAKVAAGEAGGITQHIGAYHVETDRGMVTFLDTPGHAAFTQMRARGAKATDIVILVVAADDGVMPQTREAVQHAKAAGVPLVVAVNKIDKPGADLDRIRNELAVEGVTSEDWGGDTPFVKVSAKMGTGVDELLEAVLLQAEILELKATPTAPGRGVVVESRLDKGRGPVATILVQDGTLRQGDMVLVGSNYGRVRAMLDENGKPVKEAGPSIPVEILGLDGTPDAGDEMSVVADEKKAREVALFRQGKYREVKLARAHAGKLENIFETMGQEEKKTLNIVLKTDVRGSLEALQGSLSSLGNDEVQVRVIGGGVGGITESDANLALASNAVLFGFNVRADAGARKIVEQEGLDMRYYNVIYDIIEDVKKALTGMLGSDVRENILGVAEVRDVFRSPKFGAIAGCMVIEGTVYRNRPIRVLREDVVIFEGELESLRRFKDDASEVRNGMECGIGVKSYNDVKVGDKIEVFEKVQVARTL.

Disordered stretches follow at residues L50–S72 and F92–V267. Residues S96–R135 show a composition bias toward basic and acidic residues. Residues R136–D172 are compositionally biased toward low complexity. Composition is skewed to basic and acidic residues over residues A173 to A210 and T234 to R243. A compositionally biased stretch (basic residues) spans R244–Q257. Residues S350–E517 enclose the tr-type G domain. The segment at G359–T366 is G1. A GTP-binding site is contributed by G359–T366. Positions G384–H388 are G2. The interval D405–G408 is G3. Residues D405–H409 and N459–D462 contribute to the GTP site. The interval N459–D462 is G4. The tract at residues S495–K497 is G5.

This sequence belongs to the TRAFAC class translation factor GTPase superfamily. Classic translation factor GTPase family. IF-2 subfamily.

The protein localises to the cytoplasm. One of the essential components for the initiation of protein synthesis. Protects formylmethionyl-tRNA from spontaneous hydrolysis and promotes its binding to the 30S ribosomal subunits. Also involved in the hydrolysis of GTP during the formation of the 70S ribosomal complex. This chain is Translation initiation factor IF-2, found in Pseudomonas entomophila (strain L48).